Reading from the N-terminus, the 122-residue chain is Large ribosomal subunit protein uL14 (122 aa).

It belongs to the universal ribosomal protein uL14 family. As to quaternary structure, part of the 50S ribosomal subunit. Forms a cluster with proteins L3 and L19. In the 70S ribosome, L14 and L19 interact and together make contacts with the 16S rRNA in bridges B5 and B8.

Functionally, binds to 23S rRNA. Forms part of two intersubunit bridges in the 70S ribosome. This Chlamydia trachomatis serovar A (strain ATCC VR-571B / DSM 19440 / HAR-13) protein is Large ribosomal subunit protein uL14.